Here is a 208-residue protein sequence, read N- to C-terminus: Imidazole glycerol phosphate synthase subunit HisH (208 aa).

The Glutamine amidotransferase type-1 domain occupies 1–206 (MFAIVDYDTG…KEMVSANDFS (206 aa)). C79 (nucleophile) is an active-site residue. Residues H181 and E183 contribute to the active site.

In terms of assembly, heterodimer of HisH and HisF.

The protein localises to the cytoplasm. The enzyme catalyses 5-[(5-phospho-1-deoxy-D-ribulos-1-ylimino)methylamino]-1-(5-phospho-beta-D-ribosyl)imidazole-4-carboxamide + L-glutamine = D-erythro-1-(imidazol-4-yl)glycerol 3-phosphate + 5-amino-1-(5-phospho-beta-D-ribosyl)imidazole-4-carboxamide + L-glutamate + H(+). The catalysed reaction is L-glutamine + H2O = L-glutamate + NH4(+). It participates in amino-acid biosynthesis; L-histidine biosynthesis; L-histidine from 5-phospho-alpha-D-ribose 1-diphosphate: step 5/9. Its function is as follows. IGPS catalyzes the conversion of PRFAR and glutamine to IGP, AICAR and glutamate. The HisH subunit catalyzes the hydrolysis of glutamine to glutamate and ammonia as part of the synthesis of IGP and AICAR. The resulting ammonia molecule is channeled to the active site of HisF. The polypeptide is Imidazole glycerol phosphate synthase subunit HisH (Lactiplantibacillus plantarum (strain ATCC BAA-793 / NCIMB 8826 / WCFS1) (Lactobacillus plantarum)).